The sequence spans 283 residues: Protein FAM78A (283 aa).

Belongs to the FAM78 family.

This Homo sapiens (Human) protein is Protein FAM78A (FAM78A).